A 661-amino-acid polypeptide reads, in one-letter code: Heme transporter BhuA (661 aa).

An N-terminal signal peptide occupies residues Met1–Ala23. The TBDR plug domain occupies Lys48–Val159. The TBDR beta-barrel domain occupies Thr170–Phe661.

This sequence belongs to the TonB-dependent receptor family.

The protein resides in the cell outer membrane. Functionally, heme transporter. This is Heme transporter BhuA (bhuA) from Brucella abortus biovar 1 (strain 9-941).